The chain runs to 277 residues: Glutamate racemase (277 aa).

Residues 13-14 (DS) and 45-46 (YG) each bind substrate. Catalysis depends on Cys77, which acts as the Proton donor/acceptor. Residue 78 to 79 (NT) participates in substrate binding. Cys192 (proton donor/acceptor) is an active-site residue. 193 to 194 (TH) contacts substrate.

The protein belongs to the aspartate/glutamate racemases family.

The catalysed reaction is L-glutamate = D-glutamate. It participates in cell wall biogenesis; peptidoglycan biosynthesis. In terms of biological role, provides the (R)-glutamate required for cell wall biosynthesis. The polypeptide is Glutamate racemase (Rhizobium meliloti (strain 1021) (Ensifer meliloti)).